Consider the following 134-residue polypeptide: Ion transport peptide-like (134 aa).

Disulfide bonds link Cys-62-Cys-98, Cys-78-Cys-94, and Cys-81-Cys-107.

This sequence belongs to the arthropod CHH/MIH/GIH/VIH hormone family.

The protein resides in the secreted. This is Ion transport peptide-like from Schistocerca gregaria (Desert locust).